The following is a 719-amino-acid chain: Nucleolar complex protein 2 homolog (719 aa).

The segment covering 1–24 (MKLLKKSSSLKKGVTKRAKLQKKP) has biased composition (basic residues). 3 disordered regions span residues 1 to 67 (MKLL…GMKK), 86 to 136 (LQQE…TKIK), and 643 to 719 (ALEN…SDED). Basic and acidic residues predominate over residues 25–42 (PSKDEASSSDEELAKLDG). A compositionally biased stretch (acidic residues) spans 89 to 130 (EDADLLNMEEDEDDDEEGEDNEDEEDEEEEEESDEDDDEEDD). Basic and acidic residues predominate over residues 643–661 (ALENSKKDDKKKKKEEEAA).

This sequence belongs to the NOC2 family.

It is found in the nucleus. Functionally, required for normal somatic gonad development and for regulation of germline development and proliferation. This chain is Nucleolar complex protein 2 homolog (pro-2), found in Caenorhabditis briggsae.